Here is an 87-residue protein sequence, read N- to C-terminus: HssA/B-like protein 7 (87 aa).

The span at 1-22 (MSILSALTSISNPMKSTKSSVA) shows a compositional bias: polar residues. The interval 1–23 (MSILSALTSISNPMKSTKSSVAN) is disordered.

The protein belongs to the hssA/B family.

The sequence is that of HssA/B-like protein 7 (hssl7) from Dictyostelium discoideum (Social amoeba).